The following is a 207-amino-acid chain: Urease accessory protein UreG (207 aa).

14 to 21 (GPVGSGKT) contributes to the GTP binding site.

This sequence belongs to the SIMIBI class G3E GTPase family. UreG subfamily. In terms of assembly, homodimer. UreD, UreF and UreG form a complex that acts as a GTP-hydrolysis-dependent molecular chaperone, activating the urease apoprotein by helping to assemble the nickel containing metallocenter of UreC. The UreE protein probably delivers the nickel.

Its subcellular location is the cytoplasm. In terms of biological role, facilitates the functional incorporation of the urease nickel metallocenter. This process requires GTP hydrolysis, probably effectuated by UreG. This Pseudomonas putida (strain GB-1) protein is Urease accessory protein UreG.